Reading from the N-terminus, the 275-residue chain is Autophagy protein 5 (275 aa).

Methionine 1 carries the post-translational modification N-acetylmethionine. Residue lysine 130 forms a Glycyl lysine isopeptide (Lys-Gly) (interchain with G-Cter in ATG12) linkage.

It belongs to the ATG5 family. In terms of assembly, forms a conjugate with ATG12. Part of the minor complex composed of 4 sets of ATG12-ATG5 and ATG16L1 (400 kDa); this complex interacts with ATG3 leading to disruption of ATG7 interaction and promotion of ATG8-like proteins lipidation. Forms an 800-kDa complex composed of ATG12-ATG5 and ATG16L2. The ATG12-ATG5 conjugate interacts with RAB33A; this interaction is bridged by ATG16L1 and promotes ATG12-ATG5-ATG16L1 complex recruitment to phagophores. Interacts with TECPR1; the interaction is direct and does not take place when ATG16L1 is associated with the ATG5-ATG12 conjugate. Interacts with DHX58/RIG-1, IFIH1/MDA5 and MAVS/IPS-1 in monomeric form as well as in ATG12-ATG5 conjugate form. The interaction with MAVS is further enhanced upon vesicular stomatitis virus (VSV) infection. Interacts with ATG3. Interacts with ATG7 and ATG10. Interacts with FADD. Interacts with Bassoon/BSN; this interaction is important for the regulation of presynaptic autophagy. Interacts with ATG16L2. Conjugated to ATG12; which is essential for autophagy, but is not required for association with isolation membrane. In terms of processing, acetylated by EP300.

It is found in the cytoplasm. Its subcellular location is the preautophagosomal structure membrane. Its function is as follows. Involved in autophagic vesicle formation. Conjugation with ATG12, through a ubiquitin-like conjugating system involving ATG7 as an E1-like activating enzyme and ATG10 as an E2-like conjugating enzyme, is essential for its function. The ATG12-ATG5 conjugate acts as an E3-like enzyme which is required for lipidation of ATG8 family proteins and their association to the vesicle membranes. Involved in mitochondrial quality control after oxidative damage, and in subsequent cellular longevity. Plays a critical role in multiple aspects of lymphocyte development and is essential for both B and T lymphocyte survival and proliferation. Required for optimal processing and presentation of antigens for MHC II. Involved in the maintenance of axon morphology and membrane structures, as well as in normal adipocyte differentiation. Promotes primary ciliogenesis through removal of OFD1 from centriolar satellites and degradation of IFT20 via the autophagic pathway. As part of the ATG8 conjugation system with ATG12 and ATG16L1, required for recruitment of LRRK2 to stressed lysosomes and induction of LRRK2 kinase activity in response to lysosomal stress. In terms of biological role, may play an important role in the apoptotic process, possibly within the modified cytoskeleton. Its expression is a relatively late event in the apoptotic process, occurring downstream of caspase activity. Plays a crucial role in IFN-gamma-induced autophagic cell death by interacting with FADD. The chain is Autophagy protein 5 from Pongo abelii (Sumatran orangutan).